Here is a 627-residue protein sequence, read N- to C-terminus: Serine/threonine-protein kinase Nek5 (627 aa).

One can recognise a Protein kinase domain in the interval 4-255; that stretch reads FHLIKIIGEG…VTSLLKRPFL (252 aa). Residues 10–18 and Lys33 each bind ATP; that span reads IGEGTFGKV. Residue Asp124 is the Proton acceptor of the active site. Over residues 563–580 the composition is skewed to acidic residues; that stretch reads QLEPGSDEDDIKFEESED. Disordered stretches follow at residues 563–582 and 591–627; these read QLEP…EDEL and EKLA…KKLQ. Residues 609 to 619 show a composition bias toward basic and acidic residues; that stretch reads NAEEPGEKEKT.

Belongs to the protein kinase superfamily. NEK Ser/Thr protein kinase family. NIMA subfamily. It depends on Mg(2+) as a cofactor.

The protein resides in the cell projection. It localises to the cilium. The protein localises to the flagellum. The enzyme catalyses L-seryl-[protein] + ATP = O-phospho-L-seryl-[protein] + ADP + H(+). It catalyses the reaction L-threonyl-[protein] + ATP = O-phospho-L-threonyl-[protein] + ADP + H(+). In Mus musculus (Mouse), this protein is Serine/threonine-protein kinase Nek5 (Nek5).